We begin with the raw amino-acid sequence, 362 residues long: MKINGTPYRTIWLAKDGRTVEIIDQTRLPHEFVVVPLASLEDAAKSIKDMWVRGAPLIGATAAYGMALATLADASDAGLERAYQVLHATRPTAINLKWALDEMIAALTPLPVPERSAAAYARAAEICDEDSAQNAALGEHGAAIIAAHHKAKNRTINILTHCNAGWLATVDWGTALAPIYKAFDAGIPLHVWVDETRPRNQGASLTARELNWHGVPHTVIADNTGGHLMQHGMVDLCIVGTDRTTRNGDVCNKIGTYLKALAAKDNNVPFYVGLPSPTIDWNVADGVKEIPIEERSDREQTHIFGKTEDGVVREVQVTPDGSPAVNYGFDVTPARLVTGLITERGVCEASPEGLKGLFPERA.

Substrate is bound by residues 53–55, R90, and Q201; that span reads RGA. D242 functions as the Proton donor in the catalytic mechanism. 252–253 contacts substrate; it reads NK.

Belongs to the eIF-2B alpha/beta/delta subunits family. MtnA subfamily.

It catalyses the reaction 5-(methylsulfanyl)-alpha-D-ribose 1-phosphate = 5-(methylsulfanyl)-D-ribulose 1-phosphate. It participates in amino-acid biosynthesis; L-methionine biosynthesis via salvage pathway; L-methionine from S-methyl-5-thio-alpha-D-ribose 1-phosphate: step 1/6. Catalyzes the interconversion of methylthioribose-1-phosphate (MTR-1-P) into methylthioribulose-1-phosphate (MTRu-1-P). The chain is Methylthioribose-1-phosphate isomerase from Paramagnetospirillum magneticum (strain ATCC 700264 / AMB-1) (Magnetospirillum magneticum).